A 232-amino-acid chain; its full sequence is Anthranilate synthase component 2 (232 aa).

The Glutamine amidotransferase type-1 domain maps to 2–198 (RILVVDNYDS…LTCCGWTQDD (197 aa)). Residue 55–57 (GPG) coordinates L-glutamine. Residue Cys-83 is the Nucleophile; for GATase activity of the active site. Residues Gln-87 and 133-134 (SL) contribute to the L-glutamine site. Active-site for GATase activity residues include His-172 and Glu-174.

As to quaternary structure, heterotetramer consisting of two non-identical subunits: a beta subunit (TrpG) and a large alpha subunit (TrpE).

The enzyme catalyses chorismate + L-glutamine = anthranilate + pyruvate + L-glutamate + H(+). The protein operates within amino-acid biosynthesis; L-tryptophan biosynthesis; L-tryptophan from chorismate: step 1/5. Its function is as follows. Part of a heterotetrameric complex that catalyzes the two-step biosynthesis of anthranilate, an intermediate in the biosynthesis of L-tryptophan. In the first step, the glutamine-binding beta subunit (TrpG) of anthranilate synthase (AS) provides the glutamine amidotransferase activity which generates ammonia as a substrate that, along with chorismate, is used in the second step, catalyzed by the large alpha subunit of AS (TrpE) to produce anthranilate. In the absence of TrpG, TrpE can synthesize anthranilate directly from chorismate and high concentrations of ammonia. The polypeptide is Anthranilate synthase component 2 (trpG) (Mycobacterium tuberculosis (strain CDC 1551 / Oshkosh)).